We begin with the raw amino-acid sequence, 418 residues long: MADRYENQPPEKLQGKYQAMVVCCILGIGSLVSWNSMLTIADYYYKVFPDYHPSRVLTLVYQPFALGTILILAYHESKINTRKRNLIGYILFTISTFLLIVLDLATKGRGGIGPYIGLCAVVASFGLADATVQGGMIGDLSLMCPELVQSFMGGLAVSGALTSALRLITKAAFEKTNDGPRKGAMMFLAISTCIELLCVFLYAYVFPKLPIVKYYRRKAASEGSKTVSADLAAAGIQNQSDLTDDDSKNQRLSNKELLIQNIDYAVNLFLIYVCTLSIFPGFLYENTGQHGLGDWYALVLVAMYNCWDLVGRYTPLVKWLKIENRKLITIAVLSRYLLIPAFYFTAKYGDQGWMIMLISVLGLTNGHLTVCIMTIAPKGYKGPEQNALGNLLVIFLLGGIFAGVALDWLWLIGKKNAF.

11 helical membrane-spanning segments follow: residues 20 to 40, 56 to 76, 86 to 106, 112 to 132, 142 to 162, 186 to 206, 264 to 284, 291 to 311, 326 to 346, 353 to 373, and 392 to 412; these read MVVC…MLTI, VLTL…AYHE, LIGY…DLAT, IGPY…DATV, LMCP…GALT, MFLA…AYVF, YAVN…GFLY, GLGD…DLVG, KLIT…YFTA, WMIM…VCIM, and LVIF…LWLI.

The protein belongs to the SLC29A/ENT transporter (TC 2.A.57) family. In terms of tissue distribution, expressed in root tips, vasculature of roots and leaves, and meristems of leaf primordia. Expressed in flowers and siliques.

It localises to the cell membrane. In terms of biological role, nucleoside transporter that functions as a pyrimidine nucleoside carrier in all organs. Has high affinity for adenosine and uridine when expressed in a heterologous system (yeast). Mediates proton-dependent adenosine or uridine transport in Xenopus oocytes. The sequence is that of Equilibrative nucleotide transporter 3 from Arabidopsis thaliana (Mouse-ear cress).